The sequence spans 752 residues: MPLAQLAEPWPNMELVQLDTENGQAAPEEGGNPPCKAKSDITWVEKDLVDSTDKGEGVVKEINITHHVKEGSEKADPSQFELLKVLGQGSFGKVFLVRKITPPDSNHLYAMKVLKKATLKVRDRVRTKIERDILADVNHPFVVKLHYAFQTEGKLYLILDFLRGGDLFTRLSKEVMFTEEDVKFYLAELALGLDHLHSLGIIYRDLKPENILLDEEGHIKLTDFGLSKEAIDHEKKAYSFCGTVEYMAPEVVNRQGHSHSADWWSYGVLMFEMLTGSLPFQGKDRKETMTLILKAKLGMPQFLSAEAQSLLRALFKRNPANRLGSGPDGAEEIKRHPFYSTIDWNKLYRREIKPPFKPAVGQPDDTFYFDTEFTSRTPKDSPGIPPSAGAHQLFRGFSFVATGLMEDSKVKPAQPPLHSVVQQLHGKNIQFSDGYVVKEAIGVGSYSVCKRCIHKTTNMEYAVKVIDKSKRDPSEEIEILLRYGQHPNIITLKDVYDDGKYVYLVTELMRGGELLDKILRQKFFSEREASSVLHTICKTVEYLHSQGVVHRDLKPSNILYVDESGNPESIRICDFGFAKQLRAENGLLMTPCYTANFVAPEVLKRQGYDEGCDIWSLGVLLYTMLAGCTPFANGPSDTPEEILTRIGGGKFSVNGGNWDTISDVAKDLVSKMLHVDPHQRLTAKQVLQHPWITQKDSLPQSQLNYQDVQLVKGAMAATYSALNSSKPSPQLKPIESSILAQRRVKKLPSTTL.

The Protein kinase 1 domain maps to 80–339; it reads FELLKVLGQG…AEEIKRHPFY (260 aa). ATP-binding positions include 86–94 and Lys112; that span reads LGQGSFGKV. Asp205 (proton acceptor) is an active-site residue. The residue at position 239 (Ser239) is a Phosphoserine. In terms of domain architecture, AGC-kinase C-terminal spans 340–409; that stretch reads STIDWNKLYR…VATGLMEDSK (70 aa). Thr377 carries the phosphothreonine modification. At Ser381 the chain carries Phosphoserine. Ser398 bears the Phosphoserine; by autocatalysis mark. One can recognise a Protein kinase 2 domain in the interval 435–692; the sequence is YVVKEAIGVG…AKQVLQHPWI (258 aa). ATP-binding positions include 441 to 449 and Lys464; that span reads IGVGSYSVC. Asp552 (proton acceptor) is an active-site residue. The residue at position 590 (Thr590) is a Phosphothreonine. At Ser749 the chain carries Phosphoserine.

This sequence belongs to the protein kinase superfamily. AGC Ser/Thr protein kinase family. S6 kinase subfamily. The cofactor is Mg(2+). In terms of processing, autophosphorylated on Ser-398, as part of the activation process. As to expression, small and large intestine, spleen, stomach, and bursa, and to a lesser extent lung and kidney.

The catalysed reaction is L-seryl-[protein] + ATP = O-phospho-L-seryl-[protein] + ADP + H(+). It carries out the reaction L-threonyl-[protein] + ATP = O-phospho-L-threonyl-[protein] + ADP + H(+). Its activity is regulated as follows. Activated by multiple phosphorylations on threonine and serine residues. Its function is as follows. Serine/threonine kinase that may play a role in mediating the growth-factor and stress induced activation of transcription. This is Ribosomal protein S6 kinase 2 alpha (RPS6KA) from Gallus gallus (Chicken).